The primary structure comprises 85 residues: Large ribosomal subunit protein bL27 (85 aa).

This sequence belongs to the bacterial ribosomal protein bL27 family.

This Stutzerimonas stutzeri (strain A1501) (Pseudomonas stutzeri) protein is Large ribosomal subunit protein bL27.